The following is a 317-amino-acid chain: Adenine deaminase (317 aa).

Residues His14, His16, and His194 each coordinate Zn(2+). Glu197 acts as the Proton donor in catalysis. Asp275 is a binding site for Zn(2+). Position 276 (Asp276) interacts with substrate.

The protein belongs to the metallo-dependent hydrolases superfamily. Adenosine and AMP deaminases family. Adenine deaminase type 2 subfamily. The cofactor is Zn(2+).

It carries out the reaction adenine + H2O + H(+) = hypoxanthine + NH4(+). Catalyzes the hydrolytic deamination of adenine to hypoxanthine. Plays an important role in the purine salvage pathway and in nitrogen catabolism. This chain is Adenine deaminase, found in Pseudomonas fluorescens (strain Pf0-1).